The following is a 193-amino-acid chain: NADH-quinone oxidoreductase subunit B (193 aa).

[4Fe-4S] cluster is bound by residues Cys72, Cys73, Cys137, and Cys167.

It belongs to the complex I 20 kDa subunit family. As to quaternary structure, NDH-1 is composed of 14 different subunits. Subunits NuoB, C, D, E, F, and G constitute the peripheral sector of the complex. Requires [4Fe-4S] cluster as cofactor.

The protein resides in the cell inner membrane. The catalysed reaction is a quinone + NADH + 5 H(+)(in) = a quinol + NAD(+) + 4 H(+)(out). In terms of biological role, NDH-1 shuttles electrons from NADH, via FMN and iron-sulfur (Fe-S) centers, to quinones in the respiratory chain. The immediate electron acceptor for the enzyme in this species is believed to be ubiquinone. Couples the redox reaction to proton translocation (for every two electrons transferred, four hydrogen ions are translocated across the cytoplasmic membrane), and thus conserves the redox energy in a proton gradient. This chain is NADH-quinone oxidoreductase subunit B, found in Bartonella bacilliformis (strain ATCC 35685 / KC583 / Herrer 020/F12,63).